Here is a 22-residue protein sequence, read N- to C-terminus: Alpha-amylase inhibitor DR4 (22 aa).

The segment at 1 to 22 is disordered; the sequence is SGGGKEAAETFNRVESHPRPDA.

Functionally, inhibits insect alpha-amylases. The polypeptide is Alpha-amylase inhibitor DR4 (Delonix regia (Royal poinciana)).